Consider the following 87-residue polypeptide: Large ribosomal subunit protein bL31B (87 aa).

The protein belongs to the bacterial ribosomal protein bL31 family. Type B subfamily. In terms of assembly, part of the 50S ribosomal subunit.

The polypeptide is Large ribosomal subunit protein bL31B (Burkholderia ambifaria (strain MC40-6)).